The following is a 236-amino-acid chain: Phosphoribosylaminoimidazole-succinocarboxamide synthase (236 aa).

It belongs to the SAICAR synthetase family.

The catalysed reaction is 5-amino-1-(5-phospho-D-ribosyl)imidazole-4-carboxylate + L-aspartate + ATP = (2S)-2-[5-amino-1-(5-phospho-beta-D-ribosyl)imidazole-4-carboxamido]succinate + ADP + phosphate + 2 H(+). The protein operates within purine metabolism; IMP biosynthesis via de novo pathway; 5-amino-1-(5-phospho-D-ribosyl)imidazole-4-carboxamide from 5-amino-1-(5-phospho-D-ribosyl)imidazole-4-carboxylate: step 1/2. This Pseudomonas putida (strain GB-1) protein is Phosphoribosylaminoimidazole-succinocarboxamide synthase.